The primary structure comprises 201 residues: tRNA (guanine-N(7)-)-methyltransferase (201 aa).

The S-adenosyl-L-methionine site is built by glutamate 33, glutamate 58, aspartate 85, and aspartate 106. Aspartate 106 is an active-site residue. Residues lysine 110, aspartate 142, and 180–183 (TTYE) contribute to the substrate site.

The protein belongs to the class I-like SAM-binding methyltransferase superfamily. TrmB family.

The catalysed reaction is guanosine(46) in tRNA + S-adenosyl-L-methionine = N(7)-methylguanosine(46) in tRNA + S-adenosyl-L-homocysteine. It functions in the pathway tRNA modification; N(7)-methylguanine-tRNA biosynthesis. Catalyzes the formation of N(7)-methylguanine at position 46 (m7G46) in tRNA. The polypeptide is tRNA (guanine-N(7)-)-methyltransferase (Mesomycoplasma hyopneumoniae (strain 232) (Mycoplasma hyopneumoniae)).